A 178-amino-acid chain; its full sequence is uncharacterized protein (178 aa).

This is an uncharacterized protein from Sulfolobus islandicus filamentous virus (isolate Iceland/Hveragerdi) (SIFV).